The sequence spans 531 residues: Aspartate--tRNA ligase, cytoplasmic (531 aa).

Residues 1 to 45 (MADAAEGEQPKLSKKELNKLARKAKKDEKAGEKGGNQQQAAAMDQ) form a disordered region. Basic and acidic residues predominate over residues 8 to 32 (EQPKLSKKELNKLARKAKKDEKAGE). An L-aspartate-binding site is contributed by glutamate 259. The tract at residues 281-284 (QLYK) is aspartate. An L-aspartate-binding site is contributed by arginine 303. ATP is bound by residues 303 to 305 (RAE), 311 to 313 (RHM), and glutamate 454. 2 residues coordinate L-aspartate: serine 457 and arginine 461. An ATP-binding site is contributed by 502–505 (GLER).

Belongs to the class-II aminoacyl-tRNA synthetase family. Type 2 subfamily. As to quaternary structure, homodimer.

The protein resides in the cytoplasm. It catalyses the reaction tRNA(Asp) + L-aspartate + ATP = L-aspartyl-tRNA(Asp) + AMP + diphosphate. This chain is Aspartate--tRNA ligase, cytoplasmic, found in Caenorhabditis elegans.